We begin with the raw amino-acid sequence, 1262 residues long: Structural maintenance of chromosomes protein 1 (1262 aa).

The stretch at 171–497 (SRSHEFQAEY…VAVVRQLSEA (327 aa)) forms a coiled coil. Residues 524–642 (SVYGRLVDLC…ESQEDAKQLA (119 aa)) form the SMC hinge domain. Positions 680 to 937 (KKWDEKVVKQ…RLESLLTKKQ (258 aa)) form a coiled coil. The interval 965–994 (EYEEDDGDDTASQSSQSATDGPSVSEEQIQ) is disordered. A compositionally biased stretch (polar residues) spans 974-991 (TASQSSQSATDGPSVSEE). Residues 1017 to 1086 (DGVRQMSNRL…QQFEKVKTDR (70 aa)) adopt a coiled-coil conformation. Positions 1148–1183 (LSGGEKTIAALALLFAVHGRNPAPFFVLDEIDAALD) match the DA-box motif.

Belongs to the SMC family. SMC1 subfamily. In terms of assembly, component of the cohesin complex, composed of the smc-1 and smc-3 heterodimer attached via their SMC hinge domain, scc-1 which links them, and scc-3. Interacts with smc-3, scc-1, scc-3 and tim-1.

The protein localises to the nucleus. It localises to the chromosome. Involved in chromosome cohesion during cell cycle and in DNA repair. Required for chromosome segregation during mitosis. Central component of cohesin complex. The cohesin complex is required for the cohesion of sister chromatids after DNA replication. The cohesin complex apparently forms a large proteinaceous ring within which sister chromatids can be trapped. At anaphase, the complex is cleaved and dissociates from chromatin, allowing sister chromatids to segregate. The protein is Structural maintenance of chromosomes protein 1 of Caenorhabditis elegans.